Reading from the N-terminus, the 263-residue chain is Acetylglutamate kinase (263 aa).

Substrate-binding positions include 48–49, R70, and N162; that span reads GG.

It belongs to the acetylglutamate kinase family. ArgB subfamily.

Its subcellular location is the cytoplasm. The enzyme catalyses N-acetyl-L-glutamate + ATP = N-acetyl-L-glutamyl 5-phosphate + ADP. Its pathway is amino-acid biosynthesis; L-arginine biosynthesis; N(2)-acetyl-L-ornithine from L-glutamate: step 2/4. In terms of biological role, catalyzes the ATP-dependent phosphorylation of N-acetyl-L-glutamate. In Vibrio parahaemolyticus serotype O3:K6 (strain RIMD 2210633), this protein is Acetylglutamate kinase.